The following is a 589-amino-acid chain: Protein NRT1/ PTR FAMILY 4.7 (589 aa).

12 helical membrane-spanning segments follow: residues 59–79 (GMLA…AFLA), 105–125 (AFMG…DAFF), 127–147 (TFHI…VLTV), 160–180 (VFLF…KGSL), 201–221 (FFFN…VTVV), 230–250 (WSYG…VFLA), 344–364 (IVIK…CLAQ), 383–403 (FTVP…ILAP), 429–449 (IGTG…VETK), 471–491 (LPIT…ADLF), 520–540 (LAMG…VTGL), and 560–580 (FYWL…FWAS).

This sequence belongs to the major facilitator superfamily. Proton-dependent oligopeptide transporter (POT/PTR) (TC 2.A.17) family. Expressed in flowers.

It is found in the membrane. This is Protein NRT1/ PTR FAMILY 4.7 (NPF4.7) from Arabidopsis thaliana (Mouse-ear cress).